The primary structure comprises 504 residues: Maturase K (504 aa).

Belongs to the intron maturase 2 family. MatK subfamily.

It is found in the plastid. The protein localises to the chloroplast. Functionally, usually encoded in the trnK tRNA gene intron. Probably assists in splicing its own and other chloroplast group II introns. The chain is Maturase K from Adenostoma fasciculatum (Chamise).